A 306-amino-acid polypeptide reads, in one-letter code: Pyridoxal 5'-phosphate synthase subunit PdxS (306 aa).

D36 lines the D-ribose 5-phosphate pocket. The active-site Schiff-base intermediate with D-ribose 5-phosphate is K93. D-ribose 5-phosphate is bound at residue G165. Residue R177 participates in D-glyceraldehyde 3-phosphate binding. Residues G226 and 247–248 (GS) contribute to the D-ribose 5-phosphate site.

This sequence belongs to the PdxS/SNZ family. In terms of assembly, in the presence of PdxT, forms a dodecamer of heterodimers.

The enzyme catalyses aldehydo-D-ribose 5-phosphate + D-glyceraldehyde 3-phosphate + L-glutamine = pyridoxal 5'-phosphate + L-glutamate + phosphate + 3 H2O + H(+). The protein operates within cofactor biosynthesis; pyridoxal 5'-phosphate biosynthesis. Its function is as follows. Catalyzes the formation of pyridoxal 5'-phosphate from ribose 5-phosphate (RBP), glyceraldehyde 3-phosphate (G3P) and ammonia. The ammonia is provided by the PdxT subunit. Can also use ribulose 5-phosphate and dihydroxyacetone phosphate as substrates, resulting from enzyme-catalyzed isomerization of RBP and G3P, respectively. This is Pyridoxal 5'-phosphate synthase subunit PdxS from Corynebacterium urealyticum (strain ATCC 43042 / DSM 7109).